A 55-amino-acid polypeptide reads, in one-letter code: Large ribosomal subunit protein bL33 (55 aa).

It belongs to the bacterial ribosomal protein bL33 family.

In Vibrio cholerae serotype O1 (strain ATCC 39541 / Classical Ogawa 395 / O395), this protein is Large ribosomal subunit protein bL33.